A 231-amino-acid chain; its full sequence is Urease subunit gamma/beta (231 aa).

A urease gamma region spans residues Met-1–Pro-101. A urease beta region spans residues Gly-102–Ala-231.

In the N-terminal section; belongs to the urease gamma subunit family. The protein in the C-terminal section; belongs to the urease beta subunit family. Heterohexamer of 3 UreC (alpha) and 3 UreAB (gamma/beta) subunits.

It localises to the cytoplasm. It carries out the reaction urea + 2 H2O + H(+) = hydrogencarbonate + 2 NH4(+). The protein operates within nitrogen metabolism; urea degradation; CO(2) and NH(3) from urea (urease route): step 1/1. This chain is Urease subunit gamma/beta, found in Pseudomonas syringae pv. tomato (strain ATCC BAA-871 / DC3000).